The primary structure comprises 505 residues: Putative ribose/galactose/methyl galactoside import ATP-binding protein 1 (505 aa).

2 consecutive ABC transporter domains span residues 10–245 (LRLE…VGRS) and 256–501 (RPTD…SGYG). Position 42–49 (42–49 (GENGAGKS)) interacts with ATP.

The protein belongs to the ABC transporter superfamily. Carbohydrate importer 2 (CUT2) (TC 3.A.1.2) family.

It localises to the cell inner membrane. The catalysed reaction is D-ribose(out) + ATP + H2O = D-ribose(in) + ADP + phosphate + H(+). The enzyme catalyses D-galactose(out) + ATP + H2O = D-galactose(in) + ADP + phosphate + H(+). Part of an ABC transporter complex involved in carbohydrate import. Could be involved in ribose, galactose and/or methyl galactoside import. Responsible for energy coupling to the transport system. This chain is Putative ribose/galactose/methyl galactoside import ATP-binding protein 1, found in Agrobacterium fabrum (strain C58 / ATCC 33970) (Agrobacterium tumefaciens (strain C58)).